Reading from the N-terminus, the 547-residue chain is Leiomodin-2 (547 aa).

Residues M1–P47 are interaction with tropomyosin alpha. Interaction with actin regions lie at residues M1–S161, K162–K497, and A521–V540. Phosphoserine is present on residues S11, S15, and S24. Residues I16–E41 adopt a coiled-coil conformation. Disordered regions lie at residues K91–K162 and M352–S533. Acidic residues-rich tracts occupy residues D95–I104 and V112–R139. Residues S113–N148 are a coiled coil. Residues G149–N160 show a composition bias toward polar residues. Basic and acidic residues predominate over residues M352–E367. S400 carries the post-translational modification Phosphoserine. Residues A419–L449 are compositionally biased toward pro residues. A compositionally biased stretch (polar residues) spans Q465–N475. Residues Q477–K487 are compositionally biased toward basic residues. Positions K494 to S512 are enriched in basic and acidic residues. The 20-residue stretch at A521–V540 folds into the WH2 domain.

Belongs to the tropomodulin family. In terms of assembly, can bind at least three actin monomers and thereby provides a nucleus for actin filament formation. Interacts (via N-terminus) with tropomyosin alpha (TPM1) (via N-terminus). May also interact with TPM2 (via N-terminus). Interacts with FLII. Specifically expressed in heart and skeletal muscles, with higher levels in heart (at protein level). Not expressed in other tissues.

Its subcellular location is the cytoplasm. It is found in the myofibril. The protein localises to the sarcomere. The protein resides in the m line. It localises to the cytoskeleton. Its function is as follows. Mediates nucleation of actin filaments and thereby promotes actin polymerization. Plays a role in the regulation of actin filament length. Required for normal sarcomere organization in the heart, and for normal heart function. This is Leiomodin-2 (LMOD2) from Homo sapiens (Human).